The chain runs to 326 residues: ELMO domain-containing protein 1 (326 aa).

An ELMO domain is found at 133-306 (QHEEMLLKLW…KFRKRIIKQL (174 aa)).

Its function is as follows. Acts as a GTPase-activating protein (GAP) toward guanine nucleotide exchange factors like ARL2, ARL3, ARF1 and ARF6, but not for GTPases outside the Arf family. The chain is ELMO domain-containing protein 1 (Elmod1) from Mus musculus (Mouse).